The sequence spans 334 residues: F420-dependent glucose-6-phosphate dehydrogenase (334 aa).

Coenzyme F420-(gamma-Glu)n is bound at residue D38. H39 (proton donor) is an active-site residue. Coenzyme F420-(gamma-Glu)n is bound by residues T75 and 106–107 (TG). E108 functions as the Proton acceptor in the catalytic mechanism. Residues N111, 175–176 (GG), and 178–179 (LV) each bind coenzyme F420-(gamma-Glu)n. The substrate site is built by T193, K196, K257, and R281.

Belongs to the F420-dependent glucose-6-phosphate dehydrogenase family. Homodimer.

It carries out the reaction oxidized coenzyme F420-(gamma-L-Glu)(n) + D-glucose 6-phosphate + H(+) = 6-phospho-D-glucono-1,5-lactone + reduced coenzyme F420-(gamma-L-Glu)(n). Its function is as follows. Catalyzes the coenzyme F420-dependent oxidation of glucose 6-phosphate (G6P) to 6-phosphogluconolactone. This Kribbella flavida (strain DSM 17836 / JCM 10339 / NBRC 14399) protein is F420-dependent glucose-6-phosphate dehydrogenase.